Reading from the N-terminus, the 1058-residue chain is Carbamoyl phosphate synthase large chain (1058 aa).

Residues 1–401 (MPKRTDIQKI…SLLKACRSLE (401 aa)) are carboxyphosphate synthetic domain. ATP is bound by residues Arg-129, Arg-169, Gly-175, Gly-176, Arg-208, Ile-210, Glu-215, Gly-241, Ile-242, His-243, Gln-284, and Glu-298. Residues 133 to 327 (KQLMEELEQP…IAKLAAKIAV (195 aa)) enclose the ATP-grasp 1 domain. Mg(2+) contacts are provided by Gln-284, Glu-298, and Asn-300. Mn(2+) contacts are provided by Gln-284, Glu-298, and Asn-300. Positions 402 to 546 (IGVHHNEIPE…YSTYGWENES (145 aa)) are oligomerization domain. Residues 547-929 (IRSDKESVLV…ALYKAFEASY (383 aa)) form a carbamoyl phosphate synthetic domain region. The ATP-grasp 2 domain maps to 671–861 (EQALKELDIP…MAQVATKLIL (191 aa)). ATP is bound by residues Arg-707, Ser-746, Ile-748, Glu-752, Gly-777, Val-778, His-779, Ser-780, Gln-820, and Glu-832. Residues Gln-820, Glu-832, and Asn-834 each contribute to the Mg(2+) site. Gln-820, Glu-832, and Asn-834 together coordinate Mn(2+). In terms of domain architecture, MGS-like spans 930–1058 (LHLPTFGNVV…ESRSFVTEAI (129 aa)). Residues 930–1058 (LHLPTFGNVV…ESRSFVTEAI (129 aa)) are allosteric domain.

It belongs to the CarB family. Composed of two chains; the small (or glutamine) chain promotes the hydrolysis of glutamine to ammonia, which is used by the large (or ammonia) chain to synthesize carbamoyl phosphate. Tetramer of heterodimers (alpha,beta)4. It depends on Mg(2+) as a cofactor. The cofactor is Mn(2+).

It carries out the reaction hydrogencarbonate + L-glutamine + 2 ATP + H2O = carbamoyl phosphate + L-glutamate + 2 ADP + phosphate + 2 H(+). The catalysed reaction is hydrogencarbonate + NH4(+) + 2 ATP = carbamoyl phosphate + 2 ADP + phosphate + 2 H(+). The protein operates within amino-acid biosynthesis; L-arginine biosynthesis; carbamoyl phosphate from bicarbonate: step 1/1. It participates in pyrimidine metabolism; UMP biosynthesis via de novo pathway; (S)-dihydroorotate from bicarbonate: step 1/3. Its function is as follows. Large subunit of the glutamine-dependent carbamoyl phosphate synthetase (CPSase). CPSase catalyzes the formation of carbamoyl phosphate from the ammonia moiety of glutamine, carbonate, and phosphate donated by ATP, constituting the first step of 2 biosynthetic pathways, one leading to arginine and/or urea and the other to pyrimidine nucleotides. The large subunit (synthetase) binds the substrates ammonia (free or transferred from glutamine from the small subunit), hydrogencarbonate and ATP and carries out an ATP-coupled ligase reaction, activating hydrogencarbonate by forming carboxy phosphate which reacts with ammonia to form carbamoyl phosphate. This chain is Carbamoyl phosphate synthase large chain, found in Streptococcus pneumoniae (strain P1031).